The chain runs to 114 residues: UPF0102 protein Amet_2739 (114 aa).

It belongs to the UPF0102 family.

The chain is UPF0102 protein Amet_2739 from Alkaliphilus metalliredigens (strain QYMF).